We begin with the raw amino-acid sequence, 895 residues long: AP-1 complex subunit gamma (895 aa).

HEAT repeat units follow at residues 130 to 166 (TAMARDISPEIEKVISHSNPYIRKKAALCAIRVLRKV), 167 to 205 (PDLTENYIPKIKALLSERNHAVILTALTLIIEICEMDST), 211 to 256 (KKMV…ILGQ), 301 to 339 (NGLKVMAINILGRFLLNRDNNIRYVALNTLSRVVNTDIQ), and 341 to 376 (VQRHRNTIVECLKDPDVSIRCRALDLIYSLVTESNI). 3 disordered regions span residues 591–687 (KQEE…MNNM), 706–733 (NNNSMGGMMNNNNNNNNNNNNNNNNNKS), and 746–770 (QLTPTPQQPQSQSQQALSPTNQTSV). Low complexity-rich tracts occupy residues 604–626 (PTQTPPQQHYQQQQQQPQQQSSQ), 639–658 (QSSANSGNNNNNNNKQGGNA), 675–687 (NGNMNNNNNMNNM), 706–731 (NNNSMGGMMNNNNNNNNNNNNNNNNN), and 746–765 (QLTPTPQQPQSQSQQALSPT). Residues 775 to 893 (PQPLTFLVYQ…SDVPDTPLPS (119 aa)) enclose the GAE domain.

The protein belongs to the adaptor complexes large subunit family. Adaptor protein complex 1 (AP-1) is a heterotetramer composed of two large adaptins (gamma-type subunit and beta-type subunit), a medium adaptin (mu-type subunit) and a small adaptin (sigma-type subunit). Interacts with rhgA.

The protein resides in the golgi apparatus. Its subcellular location is the trans-Golgi network. It localises to the cytoplasmic vesicle. It is found in the clathrin-coated vesicle membrane. Functionally, subunit of clathrin-associated adaptor protein complex 1 that plays a role in protein sorting in the trans-Golgi network (TGN) and endosomes. The AP complexes mediate the recruitment of clathrin to membranes and the recognition of sorting signals within the cytosolic tails of transmembrane cargo molecules. Also involved in early steps of phagocytosis and macropinocytosis. This Dictyostelium discoideum (Social amoeba) protein is AP-1 complex subunit gamma (ap1g1).